A 423-amino-acid chain; its full sequence is MKAIIISIGDELLKGHRVNTNAPFIARELGNIGIPVTRIITCSDDPQAIRDSVTLALTEAEAVFVTGGLGPTNDDRTRDAVRALLGRGLALDEPSFERIADYFRRRNRPVTEVMKDQAMVIEGSIAIPNTKGTAPGMIIECAPRFAGRHLVLMPGVPAEMEAMMRLTVVPFFAPLSGAFIRHTPVMTMGIGETQLADMIVEVEDSLPSGTTLAYLPHAAGVSLMVSTSGARREDVDAENRRVVEAIVAKAGRFVYATSEVTLEEVVVNLLLERKLTVAVAESCTGGLLGSRLTDVPGSSGCFLEGLVTYSNQAKVRLLGVDPATIEAHGAVSEPVAKEMARGCLERSGADISVSTTGIAGPGGGTPEKPVGTVCVGIASKLPDGAVRVEAARFVMHGDRHQNKIRFSEAALRGLLVRLKEMEF.

The protein belongs to the CinA family.

The protein is CinA-like protein of Chlorobaculum tepidum (strain ATCC 49652 / DSM 12025 / NBRC 103806 / TLS) (Chlorobium tepidum).